A 248-amino-acid chain; its full sequence is Adenosylcobinamide-GDP ribazoletransferase (248 aa).

5 helical membrane passes run 30–50 (LAES…CYAL), 54–74 (VLSG…LTAV), 112–132 (FGAL…DAVI), 134–154 (AGSF…MVLA), and 188–208 (AVSA…LAAG).

The protein belongs to the CobS family. Requires Mg(2+) as cofactor.

It localises to the cell inner membrane. The catalysed reaction is alpha-ribazole + adenosylcob(III)inamide-GDP = adenosylcob(III)alamin + GMP + H(+). It carries out the reaction alpha-ribazole 5'-phosphate + adenosylcob(III)inamide-GDP = adenosylcob(III)alamin 5'-phosphate + GMP + H(+). Its pathway is cofactor biosynthesis; adenosylcobalamin biosynthesis; adenosylcobalamin from cob(II)yrinate a,c-diamide: step 7/7. Joins adenosylcobinamide-GDP and alpha-ribazole to generate adenosylcobalamin (Ado-cobalamin). Also synthesizes adenosylcobalamin 5'-phosphate from adenosylcobinamide-GDP and alpha-ribazole 5'-phosphate. This is Adenosylcobinamide-GDP ribazoletransferase from Syntrophobacter fumaroxidans (strain DSM 10017 / MPOB).